We begin with the raw amino-acid sequence, 874 residues long: Probable inorganic carbon transporter subunit DabA (874 aa).

Zn(2+) is bound by residues Cys398, Asp400, His580, and Cys595.

It belongs to the inorganic carbon transporter (TC 9.A.2) DabA family. As to quaternary structure, forms a complex with DabB. Requires Zn(2+) as cofactor.

Its subcellular location is the cell membrane. Its function is as follows. Part of an energy-coupled inorganic carbon pump. The polypeptide is Probable inorganic carbon transporter subunit DabA (Bacillus cereus (strain Q1)).